Consider the following 860-residue polypeptide: MQEQYRPEEIESKVQLHWDEKRTFEVTEDESKEKYYCLSMLPYPSGRLHMGHVRNYTIGDVIARYQRMLGKNVLQPIGWDAFGLPAEGAAVKNNTAPAPWTYDNIAYMKNQLKMLGFGYDWSRELATCTPEYYRWEQKFFTELYKKGLVYKKTSAVNWCPNDQTVLANEQVIDGCCWRCDTKVERKEIPQWFIKITAYADELLNDLDKLDHWPDTVKTMQRNWIGRSEGVEITFNVNDYDNTLTVYTTRPDTFMGCSYLAVAAGHPLAQKAAENNPELAAFIDECRNTKVAEAEMATMEKKGVDTGFKAVHPLTGEEIPVWAANFVLMEYGTGAVMAVPGHDQRDYEFASKYGLNIKPVILAADGSEPDLSQQALTEKGVLFNSGEFNGLDHEAAFNAIADKLTAMGVGERKVNYRLRDWGVSRQRYWGAPIPMVTLEDGTVMPTPDDQLPVILPEDVVMDGITSPIKADPEWAKTTVNGMPALRETDTFDTFMESSWYYARYTCPEYKEGMLDSKAANYWLPVDIYIGGIEHAIMHLLYFRFFHKLMRDAGMVNSDEPAKQLLCQGMVLADAFYYVGENGERNWVSPVDAIVERDEKGRIVKAKDAAGHELVYTGMSKMSKSKNNGIDPQVMVERYGADTVRLFMMFASPADMTLEWQESGVEGANRFLKRVWKLVYEHTAKGDVAALNVDALTEDQKALRRDVHKTIAKVTDDIGRRQTFNTAIAAIMELMNKLAKAPTDSEQDRALMQEALLAVIRMLNPFTPHICFTLWQELKGEGDIDNAPWPVADEKAMVEDSTLVVVQVNGKVRAKITVPVDATEEQVRERAGQEHLVAKYLDGVTVRKVIYVPGKLLNLVVG.

The 'HIGH' region signature appears at 42-52 (PYPSGRLHMGH). A 'KMSKS' region motif is present at residues 619–623 (KMSKS). K622 provides a ligand contact to ATP.

Belongs to the class-I aminoacyl-tRNA synthetase family.

Its subcellular location is the cytoplasm. The enzyme catalyses tRNA(Leu) + L-leucine + ATP = L-leucyl-tRNA(Leu) + AMP + diphosphate. This is Leucine--tRNA ligase from Escherichia coli (strain SMS-3-5 / SECEC).